A 195-amino-acid polypeptide reads, in one-letter code: GTP cyclohydrolase-2 (195 aa).

48–52 (RIHSE) contacts GTP. Residues cysteine 53, cysteine 64, and cysteine 66 each coordinate Zn(2+). Residues glutamine 69, 90–92 (EGR), and threonine 112 each bind GTP. Aspartate 124 acts as the Proton acceptor in catalysis. Arginine 126 (nucleophile) is an active-site residue. GTP is bound by residues threonine 147 and lysine 152.

It belongs to the GTP cyclohydrolase II family. It depends on Zn(2+) as a cofactor.

The catalysed reaction is GTP + 4 H2O = 2,5-diamino-6-hydroxy-4-(5-phosphoribosylamino)-pyrimidine + formate + 2 phosphate + 3 H(+). Its pathway is cofactor biosynthesis; riboflavin biosynthesis; 5-amino-6-(D-ribitylamino)uracil from GTP: step 1/4. Its function is as follows. Catalyzes the conversion of GTP to 2,5-diamino-6-ribosylamino-4(3H)-pyrimidinone 5'-phosphate (DARP), formate and pyrophosphate. This chain is GTP cyclohydrolase-2, found in Campylobacter fetus subsp. fetus (strain 82-40).